Here is a 288-residue protein sequence, read N- to C-terminus: Glutamate racemase (288 aa).

Residues 1–21 (MAIARQDVNISSPEATTSDAQ) are disordered. Residues 8-21 (VNISSPEATTSDAQ) are compositionally biased toward polar residues. Substrate contacts are provided by residues 32–33 (DS) and 64–65 (YG). The active-site Proton donor/acceptor is the cysteine 96. Position 97-98 (97-98 (NT)) interacts with substrate. Cysteine 209 acts as the Proton donor/acceptor in catalysis. 210-211 (TH) contributes to the substrate binding site.

Belongs to the aspartate/glutamate racemases family.

The catalysed reaction is L-glutamate = D-glutamate. Its pathway is cell wall biogenesis; peptidoglycan biosynthesis. Its function is as follows. Provides the (R)-glutamate required for cell wall biosynthesis. This chain is Glutamate racemase, found in Proteus mirabilis (strain HI4320).